We begin with the raw amino-acid sequence, 147 residues long: Large ribosomal subunit protein bL9 (147 aa).

It belongs to the bacterial ribosomal protein bL9 family.

In terms of biological role, binds to the 23S rRNA. The chain is Large ribosomal subunit protein bL9 from Geotalea uraniireducens (strain Rf4) (Geobacter uraniireducens).